Consider the following 385-residue polypeptide: Lipid-A-disaccharide synthase (385 aa).

It belongs to the LpxB family.

It carries out the reaction a lipid X + a UDP-2-N,3-O-bis[(3R)-3-hydroxyacyl]-alpha-D-glucosamine = a lipid A disaccharide + UDP + H(+). It participates in bacterial outer membrane biogenesis; LPS lipid A biosynthesis. Condensation of UDP-2,3-diacylglucosamine and 2,3-diacylglucosamine-1-phosphate to form lipid A disaccharide, a precursor of lipid A, a phosphorylated glycolipid that anchors the lipopolysaccharide to the outer membrane of the cell. In Xylella fastidiosa (strain M12), this protein is Lipid-A-disaccharide synthase.